The sequence spans 275 residues: Hydroxyethylthiazole kinase (275 aa).

A substrate-binding site is contributed by methionine 50. ATP-binding residues include arginine 126 and serine 171. Alanine 200 lines the substrate pocket.

Belongs to the Thz kinase family. It depends on Mg(2+) as a cofactor.

The catalysed reaction is 5-(2-hydroxyethyl)-4-methylthiazole + ATP = 4-methyl-5-(2-phosphooxyethyl)-thiazole + ADP + H(+). The protein operates within cofactor biosynthesis; thiamine diphosphate biosynthesis; 4-methyl-5-(2-phosphoethyl)-thiazole from 5-(2-hydroxyethyl)-4-methylthiazole: step 1/1. Catalyzes the phosphorylation of the hydroxyl group of 4-methyl-5-beta-hydroxyethylthiazole (THZ). This Acinetobacter baumannii (strain ATCC 17978 / DSM 105126 / CIP 53.77 / LMG 1025 / NCDC KC755 / 5377) protein is Hydroxyethylthiazole kinase.